Here is a 208-residue protein sequence, read N- to C-terminus: Small ribosomal subunit protein eS1 (208 aa).

It belongs to the eukaryotic ribosomal protein eS1 family.

In Saccharolobus islandicus (strain Y.N.15.51 / Yellowstone #2) (Sulfolobus islandicus), this protein is Small ribosomal subunit protein eS1.